We begin with the raw amino-acid sequence, 261 residues long: 14-3-3 protein 8 (261 aa).

The disordered stretch occupies residues 237-261; it reads DIPEDGEEAPKGDAANKVGAGEDAE.

It belongs to the 14-3-3 family. Homodimer.

In Solanum lycopersicum (Tomato), this protein is 14-3-3 protein 8 (TFT8).